Reading from the N-terminus, the 235-residue chain is Coiled-coil domain-containing protein 71L (235 aa).

A compositionally biased stretch (basic residues) spans 1–13 (MRRSMKRRRRRRP). The segment at 1–30 (MRRSMKRRRRRRPVAPATAARGGDFRAEDG) is disordered. Serine 52 and serine 89 each carry phosphoserine. Positions 109 to 167 (PDPPGPPTARGQARRPVPRAAARRRRRGARAAAARRRKPRPPPPPPPPPEESCPAKPVA) are disordered. The span at 120 to 148 (QARRPVPRAAARRRRRGARAAAARRRKPR) shows a compositional bias: basic residues. Residues 149–159 (PPPPPPPPPEE) are compositionally biased toward pro residues. Threonine 185 carries the post-translational modification Phosphothreonine. A Phosphoserine modification is found at serine 198.

The protein is Coiled-coil domain-containing protein 71L (CCDC71L) of Homo sapiens (Human).